Consider the following 173-residue polypeptide: L-2,4-diaminobutyric acid acetyltransferase (173 aa).

Residues tryptophan 14 to glutamine 170 form the N-acetyltransferase domain.

This sequence belongs to the acetyltransferase family. EctA subfamily.

It catalyses the reaction L-2,4-diaminobutanoate + acetyl-CoA = (2S)-4-acetamido-2-aminobutanoate + CoA + H(+). It functions in the pathway amine and polyamine biosynthesis; ectoine biosynthesis; L-ectoine from L-aspartate 4-semialdehyde: step 2/3. Catalyzes the acetylation of L-2,4-diaminobutyrate (DABA) to gamma-N-acetyl-alpha,gamma-diaminobutyric acid (ADABA) with acetyl coenzyme A. The protein is L-2,4-diaminobutyric acid acetyltransferase (ectA) of Vibrio cholerae serotype O1 (strain ATCC 39315 / El Tor Inaba N16961).